The sequence spans 486 residues: Phosphomethylpyrimidine synthase (486 aa).

Residues Asn-80, Met-109, Tyr-139, His-175, 195–197 (SRG), 236–239 (DSLR), and Glu-275 each bind substrate. Residue His-279 coordinates Zn(2+). Tyr-329 is a binding site for substrate. His-370 contributes to the Zn(2+) binding site. The [4Fe-4S] cluster site is built by Cys-450, Cys-453, and Cys-458.

Belongs to the ThiC family. [4Fe-4S] cluster serves as cofactor.

It carries out the reaction 5-amino-1-(5-phospho-beta-D-ribosyl)imidazole + S-adenosyl-L-methionine = 4-amino-2-methyl-5-(phosphooxymethyl)pyrimidine + CO + 5'-deoxyadenosine + formate + L-methionine + 3 H(+). Its pathway is cofactor biosynthesis; thiamine diphosphate biosynthesis. Functionally, catalyzes the synthesis of the hydroxymethylpyrimidine phosphate (HMP-P) moiety of thiamine from aminoimidazole ribotide (AIR) in a radical S-adenosyl-L-methionine (SAM)-dependent reaction. The sequence is that of Phosphomethylpyrimidine synthase from Trichodesmium erythraeum (strain IMS101).